The chain runs to 1422 residues: Guanine nucleotide exchange factor subunit RIC1 (1422 aa).

WD repeat units follow at residues 64-103 and 304-343; these read TQFG…GDKY and NKTG…LICT. Disordered stretches follow at residues 442 to 462 and 986 to 1005; these read NPKY…SPFA and SGES…SSSG. Positions 449–460 are enriched in basic and acidic residues; the sequence is RAERMPRHEKSP. 2 positions are modified to phosphothreonine: Thr-991 and Thr-995. Phosphoserine is present on residues Ser-1014, Ser-1016, Ser-1018, Ser-1036, and Ser-1171. Residues 1021 to 1048 form a disordered region; it reads AENVPPGKFGLQKTLSMPTGPSGKRWSK. Disordered stretches follow at residues 1179 to 1198 and 1355 to 1422; these read THRD…DAFL and DTFQ…CSVS. Polar residues predominate over residues 1378–1396; that stretch reads GSCSHGSISQSEPGSNNVV. Positions 1403–1412 are enriched in acidic residues; that stretch reads TTQADEEEPL.

This sequence belongs to the RIC1 family. In terms of assembly, forms a complex with RGP1; the interaction enhances RAB6A GTPase activity. Interacts (via central domain) with RGP1. Interacts with RAB6A; the interaction is direct with a preference for RAB6A-GDP. Interacts (via C-terminus domain) with RAB33B; the interaction is direct with a preference for RAB33B-GTP. Interacts with GJA1. Expressed in the eye lens.

It localises to the cytoplasm. The protein localises to the cytosol. It is found in the membrane. Its function is as follows. The RIC1-RGP1 complex acts as a guanine nucleotide exchange factor (GEF), which activates RAB6A by exchanging bound GDP for free GTP, and may thereby be required for efficient fusion of endosome-derived vesicles with the Golgi compartment. The RIC1-RGP1 complex participates in the recycling of mannose-6-phosphate receptors. Required for phosphorylation and localization of GJA1. Is a regulator of procollagen transport and secretion, and is required for correct cartilage morphogenesis and development of the craniofacial skeleton. This chain is Guanine nucleotide exchange factor subunit RIC1, found in Mus musculus (Mouse).